Reading from the N-terminus, the 254-residue chain is NAD-dependent protein deacylase (254 aa).

The region spanning 1-250 (MERLEEARKR…LPPSPEDQAE (250 aa)) is the Deacetylase sirtuin-type domain. 22 to 41 (GAGISKPSGIPTFRDAEGLW) is an NAD(+) binding site. Tyr-66 and Arg-69 together coordinate substrate. 104–107 (QNVD) serves as a coordination point for NAD(+). The Proton acceptor role is filled by His-122. Cys-130, Cys-133, Cys-149, and Cys-152 together coordinate Zn(2+). Residues 189–191 (GTS), 215–217 (NPE), and Ala-233 each bind NAD(+).

It belongs to the sirtuin family. Class III subfamily. Zn(2+) serves as cofactor.

The protein localises to the cytoplasm. It carries out the reaction N(6)-acetyl-L-lysyl-[protein] + NAD(+) + H2O = 2''-O-acetyl-ADP-D-ribose + nicotinamide + L-lysyl-[protein]. The enzyme catalyses N(6)-succinyl-L-lysyl-[protein] + NAD(+) + H2O = 2''-O-succinyl-ADP-D-ribose + nicotinamide + L-lysyl-[protein]. Functionally, NAD-dependent lysine deacetylase and desuccinylase that specifically removes acetyl and succinyl groups on target proteins. Modulates the activities of several proteins which are inactive in their acylated form. The polypeptide is NAD-dependent protein deacylase (Thermus thermophilus (strain ATCC 27634 / DSM 579 / HB8)).